A 313-amino-acid polypeptide reads, in one-letter code: Cytochrome f (313 aa).

Positions 1–30 (MRNWSFSKAALTVSLLALSWSPFGPAEVQA) are cleaved as a signal peptide. Heme-binding residues include tyrosine 31, cysteine 51, cysteine 54, and histidine 55. Residues 279 to 298 (VQGLIIFFAFVLIAQVFLVL) form a helical membrane-spanning segment.

Belongs to the cytochrome f family. The 4 large subunits of the cytochrome b6-f complex are cytochrome b6, subunit IV (17 kDa polypeptide, petD), cytochrome f and the Rieske protein, while the 4 small subunits are PetG, PetL, PetM and PetN. The complex functions as a dimer. The cofactor is heme.

Its subcellular location is the plastid. The protein resides in the chloroplast thylakoid membrane. Functionally, component of the cytochrome b6-f complex, which mediates electron transfer between photosystem II (PSII) and photosystem I (PSI), cyclic electron flow around PSI, and state transitions. This chain is Cytochrome f, found in Nephroselmis olivacea (Green alga).